Consider the following 172-residue polypeptide: Nicotinamide-nucleotide adenylyltransferase (172 aa).

Belongs to the archaeal NMN adenylyltransferase family.

Its subcellular location is the cytoplasm. It carries out the reaction beta-nicotinamide D-ribonucleotide + ATP + H(+) = diphosphate + NAD(+). Its pathway is cofactor biosynthesis; NAD(+) biosynthesis; NAD(+) from nicotinamide D-ribonucleotide: step 1/1. This Saccharolobus solfataricus (strain ATCC 35092 / DSM 1617 / JCM 11322 / P2) (Sulfolobus solfataricus) protein is Nicotinamide-nucleotide adenylyltransferase.